Here is a 399-residue protein sequence, read N- to C-terminus: Phosphate acyltransferase (399 aa).

It belongs to the PlsX family. Homodimer. Probably interacts with PlsY.

The protein resides in the cytoplasm. It catalyses the reaction a fatty acyl-[ACP] + phosphate = an acyl phosphate + holo-[ACP]. Its pathway is lipid metabolism; phospholipid metabolism. Functionally, catalyzes the reversible formation of acyl-phosphate (acyl-PO(4)) from acyl-[acyl-carrier-protein] (acyl-ACP). This enzyme utilizes acyl-ACP as fatty acyl donor, but not acyl-CoA. In Rhodobacter capsulatus (Rhodopseudomonas capsulata), this protein is Phosphate acyltransferase.